The following is a 262-amino-acid chain: Serine/arginine-rich SC35-like splicing factor SCL30A (262 aa).

2 disordered regions span residues 1–38 (MRGR…LPTS) and 115–262 (ENRK…SPSQ). Residues Ser-9 and Ser-20 each carry the phosphoserine modification. Positions 37–115 (TSLLVRNLRH…RELTVVFAEE (79 aa)) constitute an RRM domain. Basic and acidic residues predominate over residues 115–140 (ENRKKPTEMRTRDRGGRSNRFQDRRR). The span at 150-161 (PPRRGRRSRSRS) shows a compositional bias: basic residues. Residues Ser-166, Ser-174, Ser-176, and Ser-178 each carry the phosphoserine modification. Over residues 180–190 (QDRRYEKERSY) the composition is skewed to basic and acidic residues. Ser-191 and Ser-193 each carry phosphoserine. Residues 209 to 226 (VKSHSRSPRRSVSPRKNR) show a composition bias toward basic residues. A compositionally biased stretch (low complexity) spans 234-246 (RSQSPVPRQSRSP). Ser-235, Ser-259, and Ser-261 each carry phosphoserine.

Belongs to the splicing factor SR family. SCL subfamily. Component of the spliceosome. Interacts with SNRNP35, CYP59 and RS2Z33.

Its subcellular location is the nucleus speckle. In terms of biological role, involved in intron recognition and spliceosome assembly. Binds probably to multiple 5'-GAAG-3' repeats found in its third intron, suggesting autoregulation of alternative splicing. May be necessary for accurate splicing of the 3' region of introns. The sequence is that of Serine/arginine-rich SC35-like splicing factor SCL30A (SCL30A) from Arabidopsis thaliana (Mouse-ear cress).